The primary structure comprises 513 residues: Cytochrome P450 72A552 (513 aa).

A helical membrane pass occupies residues 2–22 (EISVASVTVSVVIAVVTWWVW). Cysteine 460 provides a ligand contact to heme.

This sequence belongs to the cytochrome P450 family. Requires heme as cofactor.

The protein resides in the membrane. It carries out the reaction oleanolate + reduced [NADPH--hemoprotein reductase] + O2 = hederagenin + oxidized [NADPH--hemoprotein reductase] + H2O + H(+). Functionally, catalyzes the oxidation of oleanolate at the C-23 position to form hederagenin. The protein is Cytochrome P450 72A552 of Barbarea vulgaris (Yellow rocket).